Reading from the N-terminus, the 306-residue chain is Ribosomal protein L11 methyltransferase (306 aa).

Thr154, Gly179, Asp201, and Asn242 together coordinate S-adenosyl-L-methionine.

Belongs to the methyltransferase superfamily. PrmA family.

It localises to the cytoplasm. The enzyme catalyses L-lysyl-[protein] + 3 S-adenosyl-L-methionine = N(6),N(6),N(6)-trimethyl-L-lysyl-[protein] + 3 S-adenosyl-L-homocysteine + 3 H(+). Its function is as follows. Methylates ribosomal protein L11. This Xylella fastidiosa (strain 9a5c) protein is Ribosomal protein L11 methyltransferase.